We begin with the raw amino-acid sequence, 101 residues long: DNA-directed RNA polymerase subunit omega (101 aa).

Low complexity predominate over residues 1-13 (MSSTPAAASATPS). Positions 1-22 (MSSTPAAASATPSHGALPAYDT) are disordered.

The protein belongs to the RNA polymerase subunit omega family. In terms of assembly, the RNAP catalytic core consists of 2 alpha, 1 beta, 1 beta' and 1 omega subunit. When a sigma factor is associated with the core the holoenzyme is formed, which can initiate transcription.

The enzyme catalyses RNA(n) + a ribonucleoside 5'-triphosphate = RNA(n+1) + diphosphate. Functionally, promotes RNA polymerase assembly. Latches the N- and C-terminal regions of the beta' subunit thereby facilitating its interaction with the beta and alpha subunits. The protein is DNA-directed RNA polymerase subunit omega of Rhodococcus jostii (strain RHA1).